Consider the following 65-residue polypeptide: uncharacterized protein (65 aa).

This is an uncharacterized protein from Mycobacterium tuberculosis (strain ATCC 25618 / H37Rv).